The primary structure comprises 455 residues: MAETKEQTDDVETLMASLDQLGMEADPTSKEFNNDDSKIGAPSEVQDEKELLEFLDQLENDEEKNEKNPIEEANEENESVAATSNERQQHDASNQPSQAAQTTINKNTESATPKTVNEINKSQEFQEHVETPKQSNWLGGFWSTASAAVRSAEQRVRSIKGFEENANWDINVRNMVDLNKLGDLSNGIRSKALPTLSNTIHNVLNVVAPPIHDHEVLQVTVFHDLAGFAHLDRIVYESFEKVMFQVEGGELTVLLDKEAKVRPRTNDVYEDFGLCNGYLEAKKLAKANLAEPITEAKKMNKENKQENVGAGDDEDASESPMVRVTHLLLVIQAFTIKNKEVSDDEQLCFLIHLNDTNHNLEFSTTSQPLPLEWQRWAVDPRYIKLFGSNAILPNEWVTEWVEQSISVAAGIVAQMYTSKRMALGDPSLFAGLPEEDVNTGSSETPVPYYDGAMYA.

Disordered stretches follow at residues 1–113 and 296–317; these read MAET…SATP and AKKM…EDAS. A compositionally biased stretch (basic and acidic residues) spans 27–38; it reads PTSKEFNNDDSK. A compositionally biased stretch (polar residues) spans 80–113; that stretch reads VAATSNERQQHDASNQPSQAAQTTINKNTESATP. Residues 296–305 are compositionally biased toward basic and acidic residues; the sequence is AKKMNKENKQ.

This sequence belongs to the MTC1 family.

It localises to the cytoplasm. In terms of biological role, involved in telomere capping. The protein is Maintenance of telomere capping protein 1 of Schizosaccharomyces pombe (strain 972 / ATCC 24843) (Fission yeast).